Consider the following 306-residue polypeptide: Curved DNA-binding protein (306 aa).

Residues 5-69 (DYYAIMGVKP…QRRAEYDQLW (65 aa)) enclose the J domain.

The protein localises to the cytoplasm. It localises to the nucleoid. In terms of biological role, DNA-binding protein that preferentially recognizes a curved DNA sequence. It is probably a functional analog of DnaJ; displays overlapping activities with DnaJ, but functions under different conditions, probably acting as a molecular chaperone in an adaptive response to environmental stresses other than heat shock. Lacks autonomous chaperone activity; binds native substrates and targets them for recognition by DnaK. Its activity is inhibited by the binding of CbpM. The chain is Curved DNA-binding protein from Salmonella choleraesuis (strain SC-B67).